The following is a 326-amino-acid chain: Phospho-N-acetylmuramoyl-pentapeptide-transferase (326 aa).

The next 10 helical transmembrane spans lie at 3-23, 51-71, 77-97, 113-133, 143-163, 175-195, 199-219, 225-245, 250-270, and 306-326; these read LPTK…PYFI, TPTM…LFWV, ILLL…DDYL, ILIQ…YFTE, GIMI…VVGS, GLAA…AYMT, ISVI…LWFN, IFMG…TSVL, VLFA…VIQV, and IVIK…AFLL.

The protein belongs to the glycosyltransferase 4 family. MraY subfamily. Requires Mg(2+) as cofactor.

Its subcellular location is the cell membrane. The catalysed reaction is UDP-N-acetyl-alpha-D-muramoyl-L-alanyl-gamma-D-glutamyl-meso-2,6-diaminopimeloyl-D-alanyl-D-alanine + di-trans,octa-cis-undecaprenyl phosphate = di-trans,octa-cis-undecaprenyl diphospho-N-acetyl-alpha-D-muramoyl-L-alanyl-D-glutamyl-meso-2,6-diaminopimeloyl-D-alanyl-D-alanine + UMP. It participates in cell wall biogenesis; peptidoglycan biosynthesis. Functionally, catalyzes the initial step of the lipid cycle reactions in the biosynthesis of the cell wall peptidoglycan: transfers peptidoglycan precursor phospho-MurNAc-pentapeptide from UDP-MurNAc-pentapeptide onto the lipid carrier undecaprenyl phosphate, yielding undecaprenyl-pyrophosphoryl-MurNAc-pentapeptide, known as lipid I. The sequence is that of Phospho-N-acetylmuramoyl-pentapeptide-transferase from Wolbachia sp. subsp. Brugia malayi (strain TRS).